We begin with the raw amino-acid sequence, 388 residues long: Succinate--CoA ligase [ADP-forming] subunit beta (388 aa).

An ATP-grasp domain is found at 9–244 (KQLFAEFGLP…PSQEDKREAH (236 aa)). ATP-binding positions include Lys46, 53–55 (GRG), Glu99, Ser102, and Glu107. Residues Asn199 and Asp213 each contribute to the Mg(2+) site. Substrate is bound by residues Asn264 and 321–323 (GIV).

This sequence belongs to the succinate/malate CoA ligase beta subunit family. Heterotetramer of two alpha and two beta subunits. The cofactor is Mg(2+).

It catalyses the reaction succinate + ATP + CoA = succinyl-CoA + ADP + phosphate. The enzyme catalyses GTP + succinate + CoA = succinyl-CoA + GDP + phosphate. It functions in the pathway carbohydrate metabolism; tricarboxylic acid cycle; succinate from succinyl-CoA (ligase route): step 1/1. In terms of biological role, succinyl-CoA synthetase functions in the citric acid cycle (TCA), coupling the hydrolysis of succinyl-CoA to the synthesis of either ATP or GTP and thus represents the only step of substrate-level phosphorylation in the TCA. The beta subunit provides nucleotide specificity of the enzyme and binds the substrate succinate, while the binding sites for coenzyme A and phosphate are found in the alpha subunit. The chain is Succinate--CoA ligase [ADP-forming] subunit beta from Vibrio vulnificus (strain CMCP6).